A 406-amino-acid chain; its full sequence is MERWPWPSGGAWLLVAARALIQLLRADLRLGRPLLAALALLAALDWLCQSLLPPSAALAVLAAAGWIALSRLARPQRLPVATRAVLITGCDSGFGKETAKKLDAMGFTVLATVLEMNGPGALELRACCSPRLKLLQMDLTKPADISRALEFTKAHTTSTGLWGLVNNAGHNDVVADVELSPVATFRNCMEVNFFGALELTKGLLPLLHHSRGRIVTLGSPAGEMPYPCLAAYGTSKAAMALLMDAFSCELLPWGVKVSVIQPGCFKTESVSNVSHWEQRKQLLLANLPGELRQAYGEDYIEHLHREFLHSLRLALPDLSPVVDAITDALLAARPRPRYYPGRGLGLMYFIHYYLPEGLRRRFLQSFFIIPCLPRALRPGQPGATPAPDTAQDNPNPNPDPSLVGAR.

Residue 82–111 coordinates NAD(+); the sequence is TRAVLITGCDSGFGKETAKKLDAMGFTVLA. S219 is a substrate binding site. Y232 acts as the Proton acceptor in catalysis. The tract at residues 379–406 is disordered; that stretch reads GQPGATPAPDTAQDNPNPNPDPSLVGAR.

It belongs to the short-chain dehydrogenases/reductases (SDR) family. In terms of assembly, interacts with ligand-free cytoplasmic NR3C2. Highly expressed in the kidney.

It is found in the microsome. It localises to the endoplasmic reticulum. It carries out the reaction an 11beta-hydroxysteroid + NAD(+) = an 11-oxosteroid + NADH + H(+). The enzyme catalyses corticosterone + NAD(+) = 11-dehydrocorticosterone + NADH + H(+). The catalysed reaction is cortisol + NAD(+) = cortisone + NADH + H(+). It catalyses the reaction 11beta,17beta-dihydroxyandrost-4-ene-3-one + NAD(+) = 17beta-hydroxyandrost-4-ene-3,11-dione + NADH + H(+). It carries out the reaction 11beta-hydroxyandrost-4-ene-3,17-dione + NAD(+) = androst-4-ene-3,11,17-trione + NADH + H(+). It functions in the pathway steroid metabolism. Its activity is regulated as follows. Inhibited by carbenoloxone. In terms of biological role, catalyzes the conversion of biologically active 11beta-hydroxyglucocorticoids (11beta-hydroxysteroid) such as corticosterone, to inactive 11-ketoglucocorticoids (11-oxosteroid) such as 11-dehydrocorticosterone, in the presence of NAD(+). Functions as a dehydrogenase (oxidase), thereby decreasing the concentration of active glucocorticoids, thus protecting the nonselective mineralocorticoid receptor from occupation by glucocorticoids. Plays an important role in maintaining glucocorticoids balance during preimplantation and protects the fetus from excessive maternal corticosterone exposure. Catalyzes the oxidation of 11beta-hydroxytestosterone (11beta,17beta-dihydroxyandrost-4-ene-3-one) to 11-ketotestosterone (17beta-hydroxyandrost-4-ene-3,11-dione), a major bioactive androgen. Catalyzes the conversion of 11beta-hydroxyandrostenedione (11beta-hydroxyandrost-4-ene-3,17-dione) to 11-ketoandrostenedione (androst-4-ene-3,11,17-trione), which can be further metabolized to 11-ketotestosterone. Converts 7-beta-25-dihydroxycholesterol to 7-oxo-25-hydroxycholesterol in vitro. 7-beta-25-dihydroxycholesterol (not 7-oxo-25-hydroxycholesterol) acts as a ligand for the G-protein-coupled receptor (GPCR) Epstein-Barr virus-induced gene 2 (EBI2) and may thereby regulate immune cell migration. May protect ovulating oocytes and fertilizing spermatozoa from the adverse effects of cortisol. This Oryctolagus cuniculus (Rabbit) protein is 11-beta-hydroxysteroid dehydrogenase type 2 (HSD11B2).